Here is a 271-residue protein sequence, read N- to C-terminus: Signal recognition particle receptor subunit beta (271 aa).

Residues 37 to 57 (LLSVVVAVLAVLLTLVFWKLI) traverse the membrane as a helical segment. GTP-binding positions include 71 to 79 (GLCDSGKTL) and 92 to 95 (TQTS). Ser-112 carries the phosphoserine modification. Gly-120 provides a ligand contact to GTP. Thr-214 bears the Phosphothreonine mark. A GTP-binding site is contributed by Ala-248.

Belongs to the SRP receptor beta subunit family. Heterodimer with SRPRA.

It localises to the endoplasmic reticulum membrane. Component of the signal recognition particle (SRP) complex receptor (SR). Ensures, in conjunction with the SRP complex, the correct targeting of the nascent secretory proteins to the endoplasmic reticulum membrane system. May mediate the membrane association of SR. The sequence is that of Signal recognition particle receptor subunit beta (SRPRB) from Homo sapiens (Human).